Reading from the N-terminus, the 362-residue chain is Phosphoserine aminotransferase (362 aa).

L-glutamate contacts are provided by Ser9 and Arg42. Pyridoxal 5'-phosphate is bound by residues 76 to 77 (GR), Trp102, Thr153, Asp174, and Gln197. Lys198 carries the N6-(pyridoxal phosphate)lysine modification. A pyridoxal 5'-phosphate-binding site is contributed by 239-240 (NT).

It belongs to the class-V pyridoxal-phosphate-dependent aminotransferase family. SerC subfamily. As to quaternary structure, homodimer. It depends on pyridoxal 5'-phosphate as a cofactor.

It is found in the cytoplasm. It catalyses the reaction O-phospho-L-serine + 2-oxoglutarate = 3-phosphooxypyruvate + L-glutamate. The enzyme catalyses 4-(phosphooxy)-L-threonine + 2-oxoglutarate = (R)-3-hydroxy-2-oxo-4-phosphooxybutanoate + L-glutamate. It participates in amino-acid biosynthesis; L-serine biosynthesis; L-serine from 3-phospho-D-glycerate: step 2/3. It functions in the pathway cofactor biosynthesis; pyridoxine 5'-phosphate biosynthesis; pyridoxine 5'-phosphate from D-erythrose 4-phosphate: step 3/5. In terms of biological role, catalyzes the reversible conversion of 3-phosphohydroxypyruvate to phosphoserine and of 3-hydroxy-2-oxo-4-phosphonooxybutanoate to phosphohydroxythreonine. In Citrobacter koseri (strain ATCC BAA-895 / CDC 4225-83 / SGSC4696), this protein is Phosphoserine aminotransferase.